We begin with the raw amino-acid sequence, 298 residues long: Ribosomal RNA small subunit methyltransferase H (298 aa).

S-adenosyl-L-methionine-binding positions include 35–37 (GGH), aspartate 55, phenylalanine 82, aspartate 100, and glutamine 107.

The protein belongs to the methyltransferase superfamily. RsmH family.

The protein resides in the cytoplasm. It carries out the reaction cytidine(1402) in 16S rRNA + S-adenosyl-L-methionine = N(4)-methylcytidine(1402) in 16S rRNA + S-adenosyl-L-homocysteine + H(+). Specifically methylates the N4 position of cytidine in position 1402 (C1402) of 16S rRNA. This Chlamydia abortus (strain DSM 27085 / S26/3) (Chlamydophila abortus) protein is Ribosomal RNA small subunit methyltransferase H.